The following is a 175-amino-acid chain: Protein UPS1, mitochondrial (175 aa).

A required for mitochondrial targeting region spans residues M1 to E80. Positions V2 to N172 constitute a PRELI/MSF1 domain. The a 1,2-diacyl-sn-glycero-3-phosphate site is built by Y26, K58, K148, and N152.

The protein belongs to the slowmo family. As to quaternary structure, interacts with MDM35. Found associated with a 170 kDa complex.

It is found in the mitochondrion inner membrane. The protein resides in the mitochondrion intermembrane space. Its function is as follows. Required for maintenance of normal mitochondrial morphology. Required for PCP1-dependent processing of MGM1. The UPS1:MDM35 complex mediates the transfer of phosphatidic acid (PA) between liposomes and probably functions as a PA transporter across the mitochondrion intermembrane space. Phosphatidic acid release requires dissociation of the UPS1:MDM35 complex. Phosphatidic acid import is required for cardiolipin (CL) synthesis in the mitochondrial inner membrane. With UPS2, controls the level of cardiolipin in mitochondria. Cardiolipin is a unique phospholipid with four fatty acid chains and is present mainly in the mitochondrial inner membrane where it stabilizes the electron transport chain supercomplex between complexes III and IV through direct interaction of their subunits. The chain is Protein UPS1, mitochondrial (UPS1) from Saccharomyces cerevisiae (strain ATCC 204508 / S288c) (Baker's yeast).